Here is a 68-residue protein sequence, read N- to C-terminus: Large ribosomal subunit protein bL35 (68 aa).

The protein belongs to the bacterial ribosomal protein bL35 family.

This chain is Large ribosomal subunit protein bL35, found in Fusobacterium nucleatum subsp. nucleatum (strain ATCC 25586 / DSM 15643 / BCRC 10681 / CIP 101130 / JCM 8532 / KCTC 2640 / LMG 13131 / VPI 4355).